Consider the following 60-residue polypeptide: MAQLKVTLIHSAAHRLPKQRKIVEALGLKRVNSSVLQPDNEATRGALFQIAHLIKVEEVK.

It belongs to the universal ribosomal protein uL30 family. As to quaternary structure, part of the 50S ribosomal subunit.

This is Large ribosomal subunit protein uL30 from Levilactobacillus brevis (strain ATCC 367 / BCRC 12310 / CIP 105137 / JCM 1170 / LMG 11437 / NCIMB 947 / NCTC 947) (Lactobacillus brevis).